A 201-amino-acid polypeptide reads, in one-letter code: 3-isopropylmalate dehydratase small subunit (201 aa).

The protein belongs to the LeuD family. LeuD type 1 subfamily. In terms of assembly, heterodimer of LeuC and LeuD.

It carries out the reaction (2R,3S)-3-isopropylmalate = (2S)-2-isopropylmalate. Its pathway is amino-acid biosynthesis; L-leucine biosynthesis; L-leucine from 3-methyl-2-oxobutanoate: step 2/4. Catalyzes the isomerization between 2-isopropylmalate and 3-isopropylmalate, via the formation of 2-isopropylmaleate. The sequence is that of 3-isopropylmalate dehydratase small subunit from Rhodopseudomonas palustris (strain ATCC BAA-98 / CGA009).